The sequence spans 59 residues: Bacteriocin curvacin-A (59 aa).

Residues 1–18 (MNNVKELSMTELQTITGG) constitute a propeptide that is removed on maturation. Cys-28 and Cys-33 are joined by a disulfide.

The protein belongs to the bacteriocin class IIA/YGNGV family.

Its subcellular location is the secreted. Bactericidal activity; inhibits closely related Lactobacilli, Listeria monocytogenes and ivanovvi, Enterococcus faecalis, Carnobacterium sp and Brocothrix thermosphacta. This chain is Bacteriocin curvacin-A (curA), found in Latilactobacillus curvatus (Lactobacillus curvatus).